The following is a 47-amino-acid chain: Large ribosomal subunit protein uL14c (47 aa).

This sequence belongs to the universal ribosomal protein uL14 family. In terms of assembly, part of the 50S ribosomal subunit.

Its subcellular location is the plastid. The protein localises to the chloroplast. Binds to 23S rRNA. The protein is Large ribosomal subunit protein uL14c (rpl14) of Vigna unguiculata (Cowpea).